The following is a 305-amino-acid chain: Homoserine O-acetyltransferase (305 aa).

The Acyl-thioester intermediate role is filled by Cys-142. Lys-163 and Ser-192 together coordinate substrate. The active-site Proton acceptor is His-235. The active site involves Glu-237. Arg-249 contacts substrate.

This sequence belongs to the MetA family.

It is found in the cytoplasm. It carries out the reaction L-homoserine + acetyl-CoA = O-acetyl-L-homoserine + CoA. It functions in the pathway amino-acid biosynthesis; L-methionine biosynthesis via de novo pathway; O-acetyl-L-homoserine from L-homoserine: step 1/1. Functionally, transfers an acetyl group from acetyl-CoA to L-homoserine, forming acetyl-L-homoserine. This chain is Homoserine O-acetyltransferase, found in Cereibacter sphaeroides (strain ATCC 17025 / ATH 2.4.3) (Rhodobacter sphaeroides).